A 521-amino-acid polypeptide reads, in one-letter code: Probable cytochrome P450 12d1 proximal, mitochondrial (521 aa).

A mitochondrion-targeting transit peptide spans 1-19 (MNTLSSARSVAIYVGPVRS). Residue Cys-467 coordinates heme.

This sequence belongs to the cytochrome P450 family. Heme serves as cofactor.

The protein localises to the mitochondrion membrane. In Drosophila melanogaster (Fruit fly), this protein is Probable cytochrome P450 12d1 proximal, mitochondrial (Cyp12d1-p).